The primary structure comprises 64 residues: Cold shock protein CapA (64 aa).

The CSD domain maps to 7-64; that stretch reads GTVKWFNDEKGFGFITPQGGGDDLFVHFKAIESDGFKSLKEGQTVSFVAEKGQKGMQA.

It localises to the cytoplasm. In terms of biological role, affects cell viability at low temperatures. The sequence is that of Cold shock protein CapA (capA) from Pseudomonas fragi.